Consider the following 334-residue polypeptide: AT-hook motif nuclear-localized protein 2 (334 aa).

Residues methionine 1–valine 21 are compositionally biased toward low complexity. Disordered regions lie at residues methionine 1–serine 103 and serine 109–phenylalanine 128. Positions serine 44–glutamine 54 are enriched in pro residues. The segment covering isoleucine 71–lysine 80 has biased composition (basic residues). The Bipartite nuclear localization signal motif lies at lysine 72–lysine 80. The a.T hook DNA-binding region spans lysine 72–aspartate 84. Positions leucine 90–serine 103 are enriched in polar residues. The 141-residue stretch at alanine 147–proline 287 folds into the PPC domain. Over residues serine 306 to serine 319 the composition is skewed to polar residues. Residues serine 306–threonine 334 form a disordered region.

The protein localises to the nucleus. Functionally, transcription factor that specifically binds AT-rich DNA sequences related to the nuclear matrix attachment regions (MARs). The chain is AT-hook motif nuclear-localized protein 2 from Arabidopsis thaliana (Mouse-ear cress).